Consider the following 400-residue polypeptide: Argininosuccinate synthase (400 aa).

ATP is bound at residue 9–17 (AYSGGLDTS). Residue Tyr87 coordinates L-citrulline. Residue Gly117 coordinates ATP. L-aspartate contacts are provided by Thr119, Asn123, and Asp124. Asn123 is a binding site for L-citrulline. Residues Arg127, Ser176, Ser185, Glu261, and Tyr273 each contribute to the L-citrulline site.

It belongs to the argininosuccinate synthase family. Type 1 subfamily. Homotetramer.

It localises to the cytoplasm. The catalysed reaction is L-citrulline + L-aspartate + ATP = 2-(N(omega)-L-arginino)succinate + AMP + diphosphate + H(+). The protein operates within amino-acid biosynthesis; L-arginine biosynthesis; L-arginine from L-ornithine and carbamoyl phosphate: step 2/3. This chain is Argininosuccinate synthase, found in Pelodictyon phaeoclathratiforme (strain DSM 5477 / BU-1).